Here is a 208-residue protein sequence, read N- to C-terminus: Small ribosomal subunit protein uS4 (208 aa).

The 63-residue stretch at 95-157 (RRIDNVVYRA…DRLKKLVRSN (63 aa)) folds into the S4 RNA-binding domain.

Belongs to the universal ribosomal protein uS4 family. As to quaternary structure, part of the 30S ribosomal subunit. Contacts protein S5. The interaction surface between S4 and S5 is involved in control of translational fidelity.

Its function is as follows. One of the primary rRNA binding proteins, it binds directly to 16S rRNA where it nucleates assembly of the body of the 30S subunit. With S5 and S12 plays an important role in translational accuracy. The sequence is that of Small ribosomal subunit protein uS4 from Borrelia turicatae (strain 91E135).